A 783-amino-acid chain; its full sequence is MVNTRGYTTLPNVEEPANNSQDELNSQDFEQAIGMPSEPPVYVEEMGMEEPQAPEAFSEKVQRFRMCFENNVVIPVKKNVVDPLAQMISLASEKFDLFLSKIGNVMVMRRIFYIMMMSIIAALIIASDRLPNGKARGSNGSFSDHDLLLQYARKSIDLSKIERDLEYISSMPHMSGTSGDAAIRHYIKESFDKNGIRLAGEEEFMAYSNYPGNVSLRVYSKDDTEGFDIPLNEENFNPMSHNGQLNNIPVIYANKASLDDMASMQDQGLLNGDFILLVHYGDYVFQQMLTAQEYGAKAIIFISEPYQDNKDVIQMKSVALPQYGTGDALTPEWEGSIRDPIDATEAKCLPKIPSIPISANQGDKILAILSDTGVKFSNNLFSGSLNDCRLDLLVQTAIRERHPVHDIVGKIEGSEQAGRAIVIAAPRNSASYGTMYPSFGTVVLLSLIQLYQEMVYKFDWKPLRNIYFISFGGSEFNEAGATELMEKRTEALKSEIYTIIDVGQIGIWDDSNNLEIQCHPLLVDLFQKNMTSRKFNVKVDNVHQFGDWTPYLAQGIPVAIISSPGVMNREHPIYTVEDKFDFIKDKLRDKKKGEVLSEIMLYLVEKSLELIDDPFIPFSISNYVDFLSTTLKDLQKECPDTVNFDEVFLGTTLWENTKLQFEKWKSEWTELMYGAGTYIEPTIIAINRWSWNYLLSLIGVTQCLEEGLMDRTFYKNVIFGPKLWVDKGDPLRSWTFPEIRDTIAIKDWSSVQVQANTLGTILQNTARYFLENKNLHGINTNEF.

A disordered region spans residues 1–22 (MVNTRGYTTLPNVEEPANNSQD). At 1 to 109 (MVNTRGYTTL…SKIGNVMVMR (109 aa)) the chain is on the cytoplasmic side. A helical; Signal-anchor for type II membrane protein membrane pass occupies residues 110–127 (RIFYIMMMSIIAALIIAS). At 128 to 783 (DRLPNGKARG…NLHGINTNEF (656 aa)) the chain is on the extracellular side. N-linked (GlcNAc...) asparagine glycosylation is found at Asn139 and Asn213. Residues 241 to 333 (HNGQLNNIPV…GTGDALTPEW (93 aa)) form the PA domain. N-linked (GlcNAc...) asparagine glycosylation is present at Asn529.

The protein resides in the cell membrane. This is an uncharacterized protein from Saccharomyces cerevisiae (strain ATCC 204508 / S288c) (Baker's yeast).